Here is a 310-residue protein sequence, read N- to C-terminus: Carbamate kinase 1 (310 aa).

This sequence belongs to the carbamate kinase family.

The protein resides in the cytoplasm. It catalyses the reaction hydrogencarbonate + NH4(+) + ATP = carbamoyl phosphate + ADP + H2O + H(+). Its pathway is metabolic intermediate metabolism; carbamoyl phosphate degradation; CO(2) and NH(3) from carbamoyl phosphate: step 1/1. This Staphylococcus aureus (strain MRSA252) protein is Carbamate kinase 1 (arcC1).